The sequence spans 70 residues: U2-agatoxin-Ao1d (70 aa).

The first 20 residues, 1–20, serve as a signal peptide directing secretion; sequence MRAIIYLLLISAMVFSMTKA. Positions 21-34 are excised as a propeptide; sequence VPEEEGLQLSEDER. 3 disulfide bridges follow: cysteine 37-cysteine 53, cysteine 44-cysteine 58, and cysteine 52-cysteine 68. At leucine 69 the chain carries Leucine amide.

It belongs to the neurotoxin 01 (U2-agtx) family. In terms of tissue distribution, expressed by the venom gland.

It localises to the secreted. In terms of biological role, insect active toxin causing rapid but reversible paralysis in crickets. No activity shown in mammals. Does not show effect on mammalian voltage-gated calcium channels. The protein is U2-agatoxin-Ao1d of Agelena orientalis (Funnel-web spider).